The chain runs to 724 residues: Methionine--tRNA ligase (724 aa).

The 'HIGH' region motif lies at 12-22 (PYVNNIPHLGN). Zn(2+) is bound by residues Cys-143, Cys-146, Cys-155, and Cys-158. Residues 330–334 (KFSKS) carry the 'KMSKS' region motif. Lys-333 serves as a coordination point for ATP. Positions 560 to 665 (FREKVLLKVV…KNPIPGERII (106 aa)) constitute a tRNA-binding domain.

It belongs to the class-I aminoacyl-tRNA synthetase family. MetG type 1 subfamily. Homodimer. Zn(2+) is required as a cofactor.

The protein localises to the cytoplasm. The catalysed reaction is tRNA(Met) + L-methionine + ATP = L-methionyl-tRNA(Met) + AMP + diphosphate. Functionally, is required not only for elongation of protein synthesis but also for the initiation of all mRNA translation through initiator tRNA(fMet) aminoacylation. The sequence is that of Methionine--tRNA ligase from Borrelia garinii subsp. bavariensis (strain ATCC BAA-2496 / DSM 23469 / PBi) (Borreliella bavariensis).